Reading from the N-terminus, the 429-residue chain is Serine--tRNA ligase (429 aa).

229–231 (TAE) is an L-serine binding site. 260–262 (RSE) contacts ATP. Glu-283 lines the L-serine pocket. 347–350 (EISS) contacts ATP. Ser-383 contacts L-serine.

The protein belongs to the class-II aminoacyl-tRNA synthetase family. Type-1 seryl-tRNA synthetase subfamily. As to quaternary structure, homodimer. The tRNA molecule binds across the dimer.

It is found in the cytoplasm. The enzyme catalyses tRNA(Ser) + L-serine + ATP = L-seryl-tRNA(Ser) + AMP + diphosphate + H(+). The catalysed reaction is tRNA(Sec) + L-serine + ATP = L-seryl-tRNA(Sec) + AMP + diphosphate + H(+). It participates in aminoacyl-tRNA biosynthesis; selenocysteinyl-tRNA(Sec) biosynthesis; L-seryl-tRNA(Sec) from L-serine and tRNA(Sec): step 1/1. In terms of biological role, catalyzes the attachment of serine to tRNA(Ser). Is also able to aminoacylate tRNA(Sec) with serine, to form the misacylated tRNA L-seryl-tRNA(Sec), which will be further converted into selenocysteinyl-tRNA(Sec). In Orientia tsutsugamushi (strain Ikeda) (Rickettsia tsutsugamushi), this protein is Serine--tRNA ligase.